Reading from the N-terminus, the 604-residue chain is Aspartate--tRNA(Asp/Asn) ligase (604 aa).

Residue Glu175 participates in L-aspartate binding. The tract at residues 199–202 is aspartate; sequence QQFK. L-aspartate contacts are provided by Arg221 and His456. 221–223 is a binding site for ATP; that stretch reads RDE. Glu496 lines the ATP pocket. Arg503 contributes to the L-aspartate binding site. An ATP-binding site is contributed by 548–551; that stretch reads GVDR.

This sequence belongs to the class-II aminoacyl-tRNA synthetase family. Type 1 subfamily. In terms of assembly, homodimer.

The protein localises to the cytoplasm. It catalyses the reaction tRNA(Asx) + L-aspartate + ATP = L-aspartyl-tRNA(Asx) + AMP + diphosphate. Aspartyl-tRNA synthetase with relaxed tRNA specificity since it is able to aspartylate not only its cognate tRNA(Asp) but also tRNA(Asn). Reaction proceeds in two steps: L-aspartate is first activated by ATP to form Asp-AMP and then transferred to the acceptor end of tRNA(Asp/Asn). This Methylorubrum extorquens (strain CM4 / NCIMB 13688) (Methylobacterium extorquens) protein is Aspartate--tRNA(Asp/Asn) ligase.